We begin with the raw amino-acid sequence, 404 residues long: Cystinosin homolog (404 aa).

Over 20–123 the chain is Lumenal; that stretch reads TNNLVVRQKE…FARITVIRSH (104 aa). 4 N-linked (GlcNAc...) asparagine glycosylation sites follow: Asn46, Asn53, Asn79, and Asn97. The helical transmembrane segment at 124–144 threads the bilayer; sequence FLAILIQIVGWTYFFAWSISF. The PQ-loop 1 domain maps to 125–191; the sequence is LAILIQIVGW…MYYNSHVKNE (67 aa). The Cytoplasmic portion of the chain corresponds to 145 to 163; sequence YPQMYLNFKRKSVVGLNFD. A helical membrane pass occupies residues 164–184; it reads FLSLNLVGFCAYAIFNLLMYY. Residues 185–207 lie on the Lumenal side of the membrane; the sequence is NSHVKNEYNIVNPRSPPPVLLND. Residues 208–228 traverse the membrane as a helical segment; the sequence is VVFAVHAFLACFITILQCLFY. At 229-238 the chain is on the cytoplasmic side; that stretch reads ERDNQSVSSK. A helical transmembrane segment spans residues 239 to 259; sequence CIALMIVLISFGFCSAAATVL. At 260–263 the chain is on the lumenal side; the sequence is RKIQ. A helical membrane pass occupies residues 264-285; the sequence is LLSFVTSLSYIKMAVTCCKYFP. The region spanning 266–327 is the PQ-loop 2 domain; that stretch reads SFVTSLSYIK…MILQAVNVND (62 aa). At 286-295 the chain is on the cytoplasmic side; sequence QAYFNYTRKS. The helical transmembrane segment at 296–316 threads the bilayer; sequence TVGWSIGNIMLDFTGGTLDIL. Topologically, residues 317–337 are lumenal; the sequence is QMILQAVNVNDWSAFYANPVK. A helical membrane pass occupies residues 338–358; it reads FGLGFVSIFFDIIFMVQHYVL. At 359-404 the chain is on the cytoplasmic side; the sequence is YPNAEVPHNEYHGVDNPNPDNIARDAEQYAGDSESMESTEPIIVHD.

This sequence belongs to the cystinosin family.

It is found in the lysosome membrane. Its subcellular location is the cytoplasmic vesicle. The protein localises to the phagosome. The catalysed reaction is L-cystine(out) + H(+)(out) = L-cystine(in) + H(+)(in). In terms of biological role, cystine/H(+) symporter that mediates export of cystine, the oxidized dimer of cysteine, from lysosomes. May play a role in the degradation of engulfed apoptotic cells. The polypeptide is Cystinosin homolog (ctns-1) (Caenorhabditis elegans).